The chain runs to 367 residues: Polygalacturonase (367 aa).

The signal sequence occupies residues Met1–Ala19. Residues Cys27 and Cys42 are joined by a disulfide bond. N-linked (GlcNAc...) asparagine glycosylation occurs at Asn185. One copy of the PbH1 1 repeat lies at Thr187–Gln208. The active-site Proton donor is the Asp201. A disulfide bridge links Cys203 with Cys219. Residue His223 is part of the active site. Residues Val240–Thr261 form a PbH1 2 repeat. N-linked (GlcNAc...) asparagine glycosylation occurs at Asn242. A disulfide bond links Cys334 and Cys339. N-linked (GlcNAc...) asparagine glycans are attached at residues Asn343 and Asn357. A disulfide bridge connects residues Cys358 and Cys367.

This sequence belongs to the glycosyl hydrolase 28 family. Expressed in larval carcasses and gut, and adult gut.

The protein resides in the secreted. It localises to the cell wall. It catalyses the reaction (1,4-alpha-D-galacturonosyl)n+m + H2O = (1,4-alpha-D-galacturonosyl)n + (1,4-alpha-D-galacturonosyl)m.. The protein is Polygalacturonase of Phaedon cochleariae (Mustard beetle).